We begin with the raw amino-acid sequence, 252 residues long: Enolase-phosphatase E1 (252 aa).

2 residues coordinate Mg(2+): aspartate 14 and glutamate 16. Substrate-binding positions include 143–144 (SS) and lysine 177. Aspartate 202 provides a ligand contact to Mg(2+).

Belongs to the HAD-like hydrolase superfamily. MasA/MtnC family. Monomer. Mg(2+) serves as cofactor.

It is found in the cytoplasm. The protein resides in the nucleus. The catalysed reaction is 5-methylsulfanyl-2,3-dioxopentyl phosphate + H2O = 1,2-dihydroxy-5-(methylsulfanyl)pent-1-en-3-one + phosphate. Its pathway is amino-acid biosynthesis; L-methionine biosynthesis via salvage pathway; L-methionine from S-methyl-5-thio-alpha-D-ribose 1-phosphate: step 3/6. The protein operates within amino-acid biosynthesis; L-methionine biosynthesis via salvage pathway; L-methionine from S-methyl-5-thio-alpha-D-ribose 1-phosphate: step 4/6. Functionally, bifunctional enzyme that catalyzes the enolization of 2,3-diketo-5-methylthiopentyl-1-phosphate (DK-MTP-1-P) into the intermediate 2-hydroxy-3-keto-5-methylthiopentenyl-1-phosphate (HK-MTPenyl-1-P), which is then dephosphorylated to form the acireductone 1,2-dihydroxy-3-keto-5-methylthiopentene (DHK-MTPene). The polypeptide is Enolase-phosphatase E1 (Drosophila persimilis (Fruit fly)).